The following is a 92-amino-acid chain: Small ribosomal subunit protein uS19c (92 aa).

It belongs to the universal ribosomal protein uS19 family.

Its subcellular location is the plastid. It localises to the chloroplast. Protein S19 forms a complex with S13 that binds strongly to the 16S ribosomal RNA. The chain is Small ribosomal subunit protein uS19c from Staurastrum punctulatum (Green alga).